The chain runs to 107 residues: MATTRVSHVLGFLLWISLLIFVSIGLFGNFSSKPINPFPSPVITLPALYYRPGRRALAVKTFDFTPFLKDLRRSNHRKALPAGGSEIDPRYGVEKRLVPSGPNPLHH.

A signal peptide spans 1–25 (MATTRVSHVLGFLLWISLLIFVSIG). A glycan (N-linked (GlcNAc...) asparagine) is linked at Asn29. The disordered stretch occupies residues 79-107 (ALPAGGSEIDPRYGVEKRLVPSGPNPLHH). Residues 87 to 97 (IDPRYGVEKRL) are compositionally biased toward basic and acidic residues. Hydroxyproline is present on residues Pro99 and Pro102. O-linked (Ara...) hydroxyproline glycosylation occurs at Pro102.

This sequence belongs to the CLV3/ESR signal peptide family. In terms of processing, the O-glycosylation (arabinosylation) of the hydroxyproline Pro-102 enhances binding affinity of the CLE13p peptide for its receptor. In terms of tissue distribution, mostly expressed in seedlings, roots, flowers, stems and apex, and, to a lower extent, in leaves and siliques.

It localises to the secreted. The protein localises to the extracellular space. Extracellular signal peptide that regulates cell fate. Represses root apical meristem maintenance. Regulates the transition of protophloem cells from proliferation to differentiation, thus impinging on postembryonic growth capacity of the root meristem; this signaling pathway requires CRN and CLV2. The polypeptide is CLAVATA3/ESR (CLE)-related protein 13 (Arabidopsis thaliana (Mouse-ear cress)).